The sequence spans 353 residues: Quinolinate synthase (353 aa).

The iminosuccinate site is built by H47 and S68. C113 serves as a coordination point for [4Fe-4S] cluster. Iminosuccinate is bound by residues Y139–N141 and S156. A [4Fe-4S] cluster-binding site is contributed by C200. Iminosuccinate-binding positions include H226–E228 and T243. C297 contacts [4Fe-4S] cluster.

This sequence belongs to the quinolinate synthase family. Type 1 subfamily. Requires [4Fe-4S] cluster as cofactor.

It is found in the cytoplasm. It catalyses the reaction iminosuccinate + dihydroxyacetone phosphate = quinolinate + phosphate + 2 H2O + H(+). It participates in cofactor biosynthesis; NAD(+) biosynthesis; quinolinate from iminoaspartate: step 1/1. Catalyzes the condensation of iminoaspartate with dihydroxyacetone phosphate to form quinolinate. This is Quinolinate synthase from Vibrio campbellii (strain ATCC BAA-1116).